Reading from the N-terminus, the 28-residue chain is 3,4-dihydroxybenzoate decarboxylase (28 aa).

As to quaternary structure, homopentamer.

The enzyme catalyses 3,4-dihydroxybenzoate + H(+) = catechol + CO2. With respect to regulation, inhibited by oxygen. Completely inhibited by HgCl(2). Partially inhibited by ZnSO(4), 2,3,4-trihydroxybeonzoate and 3,4,5-trihydroxybeonzoate. Unaffected by KCl, MnCl(2) or EDTA. Not stimulated by thiamine phosphate, pyridoxal 5'-phosphate or biotin. Not inhibited by hydroxylamine, NaBH(4) or avidin. Reversibly catalyzes the decarboxylation of 3,4-dihydroxybenzoate to catechol. Inactive toward 4-hydroxybenzoate and other benzoate derivatives. The polypeptide is 3,4-dihydroxybenzoate decarboxylase (Sedimentibacter hydroxybenzoicus (Clostridium hydroxybenzoicum)).